A 961-amino-acid chain; its full sequence is Endochitinase A (961 aa).

Residues 1–21 form the signal peptide; it reads MAPKLFTFVSALSGLASLASA. In terms of domain architecture, GH18 spans 28 to 339; the sequence is SNIAVYYGQG…EKIREILYDL (312 aa). Glu-175 serves as the catalytic Proton donor. 4 disordered regions span residues 338–720, 767–787, 813–842, and 912–933; these read DLDP…TTTE, TDVP…TADI, PPAT…GEVS, and HVPV…ASPT. Residues 342-355 are compositionally biased toward pro residues; that stretch reads NHPPPTTSPTPTPT. Composition is skewed to low complexity over residues 356–510, 519–544, 552–604, and 612–635; these read PSTT…STSS, SSTS…PVIS, TSSS…PETT, and TPGS…PATS. The segment covering 636 to 665 has biased composition (polar residues); that stretch reads GGHTETSTVSTSSANQTPSASTSKPLIPTN. Low complexity predominate over residues 666–720; it reads SASSTSTGSVTSTPSAPGVPSSSAGSDETATTSTTDSEPTSTSSGSVTAKPTTTE. A lipid anchor (GPI-anchor amidated glycine) is attached at Gly-936. Positions 937–961 are cleaved as a propeptide — removed in mature form; the sequence is AGSRYDVVKGVPALVALALSLLAVL.

Belongs to the glycosyl hydrolase 18 family. Chitinase class III subfamily. O-glycosylated but not N-glycosylated.

The protein resides in the cell membrane. It is found in the secreted. Its subcellular location is the cell wall. It localises to the cell tip. The enzyme catalyses Random endo-hydrolysis of N-acetyl-beta-D-glucosaminide (1-&gt;4)-beta-linkages in chitin and chitodextrins.. GPI-anchored chitinase involved in the degradation of chitin, a component of the cell walls of fungi and exoskeletal elements of some animals (including worms and arthropods). Required to reshape the cell wall at the sites where cell wall remodeling and/or cell wall maturation actively take place such as sites of conidia formation. The chain is Endochitinase A (chiA) from Emericella nidulans (Aspergillus nidulans).